A 1383-amino-acid polypeptide reads, in one-letter code: DNA-directed RNA polymerase subunit beta'' (1383 aa).

Zn(2+) contacts are provided by cysteine 220, cysteine 289, cysteine 296, and cysteine 299.

The protein belongs to the RNA polymerase beta' chain family. RpoC2 subfamily. In terms of assembly, in plastids the minimal PEP RNA polymerase catalytic core is composed of four subunits: alpha, beta, beta', and beta''. When a (nuclear-encoded) sigma factor is associated with the core the holoenzyme is formed, which can initiate transcription. Zn(2+) is required as a cofactor.

Its subcellular location is the plastid. It is found in the chloroplast. It carries out the reaction RNA(n) + a ribonucleoside 5'-triphosphate = RNA(n+1) + diphosphate. In terms of biological role, DNA-dependent RNA polymerase catalyzes the transcription of DNA into RNA using the four ribonucleoside triphosphates as substrates. In Oenothera elata subsp. hookeri (Hooker's evening primrose), this protein is DNA-directed RNA polymerase subunit beta''.